Reading from the N-terminus, the 245-residue chain is tRNA1(Val) (adenine(37)-N6)-methyltransferase (245 aa).

The protein belongs to the methyltransferase superfamily. tRNA (adenine-N(6)-)-methyltransferase family.

It localises to the cytoplasm. It catalyses the reaction adenosine(37) in tRNA1(Val) + S-adenosyl-L-methionine = N(6)-methyladenosine(37) in tRNA1(Val) + S-adenosyl-L-homocysteine + H(+). Its function is as follows. Specifically methylates the adenine in position 37 of tRNA(1)(Val) (anticodon cmo5UAC). In Escherichia fergusonii (strain ATCC 35469 / DSM 13698 / CCUG 18766 / IAM 14443 / JCM 21226 / LMG 7866 / NBRC 102419 / NCTC 12128 / CDC 0568-73), this protein is tRNA1(Val) (adenine(37)-N6)-methyltransferase.